The primary structure comprises 489 residues: Probable cytochrome P450 522A1 (489 aa).

Residues 1 to 21 (MILTIVIIILTVIFVNKYLLN) traverse the membrane as a helical segment. A heme-binding site is contributed by Cys-433.

Belongs to the cytochrome P450 family. The cofactor is heme.

Its subcellular location is the membrane. This Dictyostelium discoideum (Social amoeba) protein is Probable cytochrome P450 522A1 (cyp522A1).